Consider the following 335-residue polypeptide: MSLQKCQEEWGELEKEFQQLQETHKVYKQKLEELNGLQNLCSSYINKHKRRLTELKGNLHGYKHTSNVEEKELVQQINSTIKERHNAFFDMEAYLPKKNGLYLNLVLGNVNVTLLSNQAKFAYKDEYEKFKLYLTIILLLGAITCRFVLHYRVTDEVFNFLLVWYYCTLTIRESILISNGSRIKGWWVSHHYVSTFLSGVMLTWPDGLMYQIFRNQFLAFSIYQSCVQFLQYYYQSGCLYRLRALGERNHLDLTVEGFQSWMWRGLTFLLPFLFFGHFWQLYNAITLFGLSRHEECKEWQVFVLALTFLLLFLGNFLTTLKVVHTKFQKNKLKKP.

Positions 1–39 (MSLQKCQEEWGELEKEFQQLQETHKVYKQKLEELNGLQN) form a coiled coil. 6 helical membrane-spanning segments follow: residues 100–122 (GLYL…AKFA), 130–150 (FKLY…FVLH), 157–177 (VFNF…SILI), 193–213 (VSTF…YQIF), 268–288 (FLLP…ITLF), and 300–320 (QVFV…LTTL).

It belongs to the TMEM120 family.

It localises to the nucleus inner membrane. Functionally, necessary for efficient adipogenesis. Does not show ion channel activity. The polypeptide is Transmembrane protein 120B (tmem120b) (Xenopus tropicalis (Western clawed frog)).